The primary structure comprises 68 residues: DNA-directed RNA polymerase subunit Rpo10 (68 aa).

Residues C7, C10, C44, and C45 each contribute to the Zn(2+) site.

It belongs to the archaeal Rpo10/eukaryotic RPB10 RNA polymerase subunit family. As to quaternary structure, part of the RNA polymerase complex. Requires Zn(2+) as cofactor.

The protein resides in the cytoplasm. It catalyses the reaction RNA(n) + a ribonucleoside 5'-triphosphate = RNA(n+1) + diphosphate. In terms of biological role, DNA-dependent RNA polymerase (RNAP) catalyzes the transcription of DNA into RNA using the four ribonucleoside triphosphates as substrates. The polypeptide is DNA-directed RNA polymerase subunit Rpo10 (Methanococcus maripaludis (strain DSM 14266 / JCM 13030 / NBRC 101832 / S2 / LL)).